The sequence spans 462 residues: Cysteine--tRNA ligase (462 aa).

A Zn(2+)-binding site is contributed by Cys-28. Positions Val-30–His-40 match the 'HIGH' region motif. Residues Cys-211, His-236, and Glu-240 each contribute to the Zn(2+) site. Positions Lys-268 to Ser-272 match the 'KMSKS' region motif. Lys-271 serves as a coordination point for ATP.

The protein belongs to the class-I aminoacyl-tRNA synthetase family. Monomer. Requires Zn(2+) as cofactor.

It is found in the cytoplasm. It catalyses the reaction tRNA(Cys) + L-cysteine + ATP = L-cysteinyl-tRNA(Cys) + AMP + diphosphate. This is Cysteine--tRNA ligase from Aliivibrio salmonicida (strain LFI1238) (Vibrio salmonicida (strain LFI1238)).